A 102-amino-acid polypeptide reads, in one-letter code: Small ribosomal subunit protein uS10 (102 aa).

The protein belongs to the universal ribosomal protein uS10 family. Part of the 30S ribosomal subunit.

Functionally, involved in the binding of tRNA to the ribosomes. In Frankia alni (strain DSM 45986 / CECT 9034 / ACN14a), this protein is Small ribosomal subunit protein uS10.